A 170-amino-acid chain; its full sequence is Calcineurin subunit B type 1 (170 aa).

G2 carries the N-myristoyl glycine lipid modification. EF-hand domains follow at residues 18–46, 50–85, 87–122, and 128–163; these read DEIKRLGKRFKKLDLDNSGSLSVEEFMSL, QQNPLVQRVIDIFDTDGNGEVDFKEFIEGVSQFSVK, DKEQKLRFAFRIYDMDKDGYISNGELFQVLKMMVGN, and QLQQIVDKTIINADKDGDGRISFEEFCAVVGGLDIH. Residues D31, D33, S35, S37, E42, D63, D65, N67, E69, E74, D100, D102, D104, Y106, and E111 each contribute to the Ca(2+) site. Position 106 is a phosphotyrosine (Y106). The segment at 131-136 is calcineurin A binding; the sequence is QIVDKT. Ca(2+) contacts are provided by D141, D143, D145, R147, and E152.

The protein belongs to the calcineurin regulatory subunit family. As to quaternary structure, forms a complex composed of a calmodulin-dependent catalytic subunit (also known as calcineurin A) and a regulatory Ca(2+)-binding subunit (also known as calcineurin B). There are three catalytic subunits, each encoded by a separate gene (PPP3CA, PPP3CB, and PPP3CC) and two regulatory subunits which are also encoded by separate genes (PPP3R1 and PPP3R2). The interaction between the 2 subunits is Ca(2+)-independent. Interacts with catalytic subunit PPP3CA/calcineurin A. Interacts with catalytic subunit PPP3CB/calcineurin A. Interacts with CIB1 (via C-terminal region); the interaction increases upon cardiomyocyte hypertrophy. Interacts with RCAN1. Interacts with SPATA33 (via PQIIIT motif).

The protein localises to the cytoplasm. Its subcellular location is the cytosol. It is found in the cell membrane. It localises to the sarcolemma. In terms of biological role, regulatory subunit of calcineurin, a calcium-dependent, calmodulin stimulated protein phosphatase. Confers calcium sensitivity. This chain is Calcineurin subunit B type 1 (PPP3R1), found in Bos taurus (Bovine).